The sequence spans 228 residues: DNA repair and recombination protein RadB (228 aa).

The protein belongs to the eukaryotic RecA-like protein family. RadB subfamily.

In terms of biological role, involved in DNA repair and in homologous recombination. May regulate the cleavage reactions of the branch-structured DNA. Has a very weak ATPase activity that is not stimulated by DNA. Binds DNA but does not promote DNA strands exchange. The protein is DNA repair and recombination protein RadB of Thermococcus sibiricus (strain DSM 12597 / MM 739).